The chain runs to 73 residues: uncharacterized protein (73 aa).

This is an uncharacterized protein from Invertebrate iridescent virus 6 (IIV-6).